The following is a 323-amino-acid chain: Peroxisomal targeting signal 2 receptor (323 aa).

6 WD repeats span residues 65–96 (DWND…QLWD), 109–141 (EHAQ…KLWD), 153–184 (GHES…RIWD), 196–227 (AHQA…RGWD), 240–271 (GHTY…RFWN), and 284–315 (HHTE…KIYD).

The protein belongs to the WD repeat peroxin-7 family. As to quaternary structure, interacts with PEX5; interaction only takes place when PEX7 is associated with cargo proteins. Interacts with VWA8. Ubiquitous. Highest expression in pancreas, skeletal muscle and heart.

Its subcellular location is the cytoplasm. It localises to the cytosol. The protein resides in the peroxisome matrix. Its function is as follows. Receptor required for the peroxisomal import of proteins containing a C-terminal PTS2-type peroxisomal targeting signal. Specifically binds to cargo proteins containing a PTS2 peroxisomal targeting signal in the cytosol. Cargo protein-binding triggers interaction with PEX5 and formation of a ternary complex composed of PEX5 and PEX7 along with PTS2-containing cargo proteins, which is tranlocated into peroxisomes by passing through the PEX13-PEX14 docking complex. In Homo sapiens (Human), this protein is Peroxisomal targeting signal 2 receptor.